The chain runs to 352 residues: Carbohydrate sulfotransferase 11 (352 aa).

The Cytoplasmic portion of the chain corresponds to 1–16 (MKPALLEVMRMNRICR). A helical; Signal-anchor for type II membrane protein transmembrane segment spans residues 17–37 (MVLATCFGSFILVIFYFQSML). The Lumenal segment spans residues 38–352 (HPVMRRNPFG…YSVPNYLKLD (315 aa)). Residues 124 to 130 (PKVACTN) and 186 to 194 (REPFERLVS) each bind 3'-phosphoadenylyl sulfate. Asparagine 205, asparagine 223, asparagine 321, and asparagine 342 each carry an N-linked (GlcNAc...) asparagine glycan.

The protein belongs to the sulfotransferase 2 family. Post-translationally, N-glycosylated; required for activity and stability. In terms of tissue distribution, predominantly expressed in brain and kidney. Also expressed at weaker level in heart, spleen and lung. Expressed in developing chondrocytes.

It localises to the golgi apparatus membrane. It carries out the reaction chondroitin beta-D-glucuronate + n 3'-phosphoadenylyl sulfate = chondroitin 4'-sulfate + n adenosine 3',5'-bisphosphate + n H(+). Its function is as follows. Catalyzes the transfer of sulfate to position 4 of the N-acetylgalactosamine (GalNAc) residue of chondroitin. Chondroitin sulfate constitutes the predominant proteoglycan present in cartilage and is distributed on the surfaces of many cells and extracellular matrices. Can also sulfate Gal residues in desulfated dermatan sulfate. Preferentially sulfates in GlcA-&gt;GalNAc unit than in IdoA-&gt;GalNAc unit. Does not form 4, 6-di-O-sulfated GalNAc when chondroitin sulfate C is used as an acceptor. This is Carbohydrate sulfotransferase 11 (Chst11) from Mus musculus (Mouse).